Here is a 129-residue protein sequence, read N- to C-terminus: Small ribosomal subunit protein uS11 (129 aa).

Belongs to the universal ribosomal protein uS11 family. Part of the 30S ribosomal subunit. Interacts with proteins S7 and S18. Binds to IF-3.

In terms of biological role, located on the platform of the 30S subunit, it bridges several disparate RNA helices of the 16S rRNA. Forms part of the Shine-Dalgarno cleft in the 70S ribosome. This chain is Small ribosomal subunit protein uS11, found in Vibrio atlanticus (strain LGP32) (Vibrio splendidus (strain Mel32)).